A 451-amino-acid polypeptide reads, in one-letter code: 3-phosphoshikimate 1-carboxyvinyltransferase (451 aa).

Residues lysine 30, serine 31, and arginine 35 each coordinate 3-phosphoshikimate. Lysine 30 contributes to the phosphoenolpyruvate binding site. Phosphoenolpyruvate is bound by residues glycine 103 and arginine 131. Serine 176, glutamine 178, aspartate 329, and lysine 356 together coordinate 3-phosphoshikimate. Glutamine 178 is a phosphoenolpyruvate binding site. The Proton acceptor role is filled by aspartate 329. Arginine 360 and arginine 404 together coordinate phosphoenolpyruvate.

The protein belongs to the EPSP synthase family. As to quaternary structure, monomer.

The protein localises to the cytoplasm. The catalysed reaction is 3-phosphoshikimate + phosphoenolpyruvate = 5-O-(1-carboxyvinyl)-3-phosphoshikimate + phosphate. The protein operates within metabolic intermediate biosynthesis; chorismate biosynthesis; chorismate from D-erythrose 4-phosphate and phosphoenolpyruvate: step 6/7. Catalyzes the transfer of the enolpyruvyl moiety of phosphoenolpyruvate (PEP) to the 5-hydroxyl of shikimate-3-phosphate (S3P) to produce enolpyruvyl shikimate-3-phosphate and inorganic phosphate. The protein is 3-phosphoshikimate 1-carboxyvinyltransferase of Parvibaculum lavamentivorans (strain DS-1 / DSM 13023 / NCIMB 13966).